A 540-amino-acid polypeptide reads, in one-letter code: Phenylalanine--tRNA ligase beta subunit (540 aa).

A B5 domain is found at 270–347 (MTPRTLNVPR…IGYGFDKIKS (78 aa)). Mg(2+)-binding residues include aspartate 325, aspartate 331, glutamate 334, and aspartate 335.

This sequence belongs to the phenylalanyl-tRNA synthetase beta subunit family. Type 2 subfamily. As to quaternary structure, tetramer of two alpha and two beta subunits. Mg(2+) serves as cofactor.

It localises to the cytoplasm. The catalysed reaction is tRNA(Phe) + L-phenylalanine + ATP = L-phenylalanyl-tRNA(Phe) + AMP + diphosphate + H(+). The polypeptide is Phenylalanine--tRNA ligase beta subunit (Methanococcoides burtonii (strain DSM 6242 / NBRC 107633 / OCM 468 / ACE-M)).